The sequence spans 232 residues: Orotidine 5'-phosphate decarboxylase (232 aa).

Substrate contacts are provided by residues aspartate 11, lysine 33, aspartate 60–threonine 69, threonine 120, arginine 181, glutamine 190, glycine 210, and arginine 211. The Proton donor role is filled by lysine 62.

It belongs to the OMP decarboxylase family. Type 1 subfamily. In terms of assembly, homodimer.

The enzyme catalyses orotidine 5'-phosphate + H(+) = UMP + CO2. It functions in the pathway pyrimidine metabolism; UMP biosynthesis via de novo pathway; UMP from orotate: step 2/2. In terms of biological role, catalyzes the decarboxylation of orotidine 5'-monophosphate (OMP) to uridine 5'-monophosphate (UMP). The polypeptide is Orotidine 5'-phosphate decarboxylase (Vibrio vulnificus (strain YJ016)).